The primary structure comprises 264 residues: Phycocyanobilin:ferredoxin oxidoreductase (264 aa).

The protein belongs to the HY2 family.

The enzyme catalyses (2R,3Z)-phycocyanobilin + 4 oxidized [2Fe-2S]-[ferredoxin] = biliverdin IXalpha + 4 reduced [2Fe-2S]-[ferredoxin] + 4 H(+). Functionally, catalyzes the four-electron reduction of biliverdin IX-alpha (2-electron reduction at both the A and D rings); the reaction proceeds via an isolatable 2-electron intermediate, 181,182-dihydrobiliverdin. This chain is Phycocyanobilin:ferredoxin oxidoreductase, found in Prochlorococcus marinus (strain MIT 9303).